A 173-amino-acid chain; its full sequence is Peptide deformylase (173 aa).

Residues Cys91 and His133 each coordinate Fe cation. Glu134 is a catalytic residue. His137 lines the Fe cation pocket.

It belongs to the polypeptide deformylase family. The cofactor is Fe(2+).

It carries out the reaction N-terminal N-formyl-L-methionyl-[peptide] + H2O = N-terminal L-methionyl-[peptide] + formate. Its function is as follows. Removes the formyl group from the N-terminal Met of newly synthesized proteins. Requires at least a dipeptide for an efficient rate of reaction. N-terminal L-methionine is a prerequisite for activity but the enzyme has broad specificity at other positions. This chain is Peptide deformylase, found in Blochmanniella pennsylvanica (strain BPEN).